Consider the following 715-residue polypeptide: Polyribonucleotide nucleotidyltransferase (715 aa).

2 residues coordinate Mg(2+): Asp495 and Asp501. Residues 562–621 enclose the KH domain; that stretch reads PRLLTLQIPPDMIGLVIGPGGKTVRGISEQYNVKVDISEEGLVTITAPNETNAKQARAAI. One can recognise an S1 motif domain in the interval 631 to 699; that stretch reads GDVYLGRVTR…SKGRINLTRL (69 aa).

This sequence belongs to the polyribonucleotide nucleotidyltransferase family. Requires Mg(2+) as cofactor.

It is found in the cytoplasm. It catalyses the reaction RNA(n+1) + phosphate = RNA(n) + a ribonucleoside 5'-diphosphate. Its function is as follows. Involved in mRNA degradation. Catalyzes the phosphorolysis of single-stranded polyribonucleotides processively in the 3'- to 5'-direction. The chain is Polyribonucleotide nucleotidyltransferase from Thermosynechococcus vestitus (strain NIES-2133 / IAM M-273 / BP-1).